The primary structure comprises 62 residues: Conotoxin Gm5.2 (62 aa).

An N-terminal signal peptide occupies residues 1 to 22; sequence MRCLPVFVILLLLIASAPSVDA. The propeptide occupies 23–49; the sequence is QPKTKDDVPLAPLHDNIRSTLQTLRKK. Ser-60 carries the post-translational modification Serine amide.

The protein belongs to the conotoxin T superfamily. In terms of processing, contains 2 disulfide bonds that can be either 'C1-C3, C2-C4' or 'C1-C4, C2-C3', since these disulfide connectivities have been observed for conotoxins with cysteine framework V (for examples, see AC P0DQQ7 and AC P81755). In terms of tissue distribution, expressed by the venom duct.

It is found in the secreted. The chain is Conotoxin Gm5.2 from Conus gloriamaris (Glory-of-the-Sea cone).